The chain runs to 521 residues: Ribonuclease Y (521 aa).

Residues 5–25 form a helical membrane-spanning segment; the sequence is TVWILISILLATVGAVVGFFV. Positions 87–117 are disordered; the sequence is KQENRLMQKEENLDRKDETLDNRERQLEKKE. The KH domain occupies 211–274; sequence TVSVVNLPND…ETARIALDKL (64 aa). The HD domain maps to 337 to 430; it reads VLKHSMEVAY…VAAADALSAA (94 aa).

It belongs to the RNase Y family.

It localises to the cell membrane. Its function is as follows. Endoribonuclease that initiates mRNA decay. The chain is Ribonuclease Y from Bacillus mycoides (strain KBAB4) (Bacillus weihenstephanensis).